Consider the following 266-residue polypeptide: UPF0328 protein ECU03_0130 (266 aa).

Belongs to the UPF0328 family.

This Encephalitozoon cuniculi (strain GB-M1) (Microsporidian parasite) protein is UPF0328 protein ECU03_0130.